The following is a 254-amino-acid chain: Hydroxyacylglutathione hydrolase (254 aa).

Zn(2+) is bound by residues H52, H54, D56, H57, H109, D126, and H164.

It belongs to the metallo-beta-lactamase superfamily. Glyoxalase II family. Monomer. Requires Zn(2+) as cofactor.

It catalyses the reaction an S-(2-hydroxyacyl)glutathione + H2O = a 2-hydroxy carboxylate + glutathione + H(+). The protein operates within secondary metabolite metabolism; methylglyoxal degradation; (R)-lactate from methylglyoxal: step 2/2. Its function is as follows. Thiolesterase that catalyzes the hydrolysis of S-D-lactoyl-glutathione to form glutathione and D-lactic acid. The sequence is that of Hydroxyacylglutathione hydrolase from Stenotrophomonas maltophilia (strain R551-3).